Reading from the N-terminus, the 29-residue chain is Cyclotide mela-3 (29 aa).

A cross-link (cyclopeptide (Gly-Asp)) is located at residues 1 to 29 (GKPICGETCFKGKCYTPGCTCSYPICKKD). 3 cysteine pairs are disulfide-bonded: Cys5–Cys19, Cys9–Cys21, and Cys14–Cys26.

In terms of processing, this is a cyclic peptide. Post-translationally, contains 3 disulfide bonds.

In terms of biological role, probably participates in a plant defense mechanism (Potential). Binds to and induces leakage in phospholipd membranes, particularly ones containing 1-palmitoyl-2-oleophosphatidylethanolamine (POPE). In vitro, displays cytotoxicity against cultured cells. Not active against Gram-negative bacterium E.coli ATCC 25922 or Gram-positive bacterium S.aureus ATCC 25923 up to a concentration of 64 uM. The sequence is that of Cyclotide mela-3 from Melicytus latifolius (Norfolk Island mahoe).